Consider the following 356-residue polypeptide: Zinc finger CCCH domain-containing protein 49 (356 aa).

2 consecutive C3H1-type zinc fingers follow at residues 120 to 146 and 155 to 177; these read YSGTACPDFRKGGCKKGDSCEFAHGVF and YRTQPCKDGGNCLRKICFFAHSP. The interval 209-235 is disordered; the sequence is ISPVSGSPPMSPRADSESSPMTQSLSR. Polar residues predominate over residues 225–235; it reads ESSPMTQSLSR.

This is Zinc finger CCCH domain-containing protein 49 from Arabidopsis thaliana (Mouse-ear cress).